The following is a 132-amino-acid chain: Transcriptional repressor SmtB homolog (132 aa).

Zn(2+)-binding residues include Cys20, His26, Cys71, Cys73, Asp114, His116, His127, and Glu130. Residues 38-132 (MSLDQAQQMA…EVADHLQESD (95 aa)) form the HTH arsR-type domain. The segment at residues 72-91 (VCDLAAAMKVSESAVSHQLR) is a DNA-binding region (H-T-H motif).

Homodimer.

Its function is as follows. Transcriptional repressor of the expression of the ziaA gene. Controls zinc homeostasis by triggering ZiaA-mediated efflux of excess zinc into the periplasm. The sequence is that of Transcriptional repressor SmtB homolog (ziaR) from Synechocystis sp. (strain ATCC 27184 / PCC 6803 / Kazusa).